We begin with the raw amino-acid sequence, 85 residues long: Alpha-toxin Amm8 (85 aa).

The N-terminal stretch at 1 to 19 (MNYLVMISLALLFMTGVES) is a signal peptide. The LCN-type CS-alpha/beta domain maps to 21–83 (KDGYIVNDIN…VRTKGPGRCN (63 aa)). Disulfide bonds link C31/C82, C35/C55, C41/C65, and C45/C67. A propeptide (removed by a carboxypeptidase) is located at residue R85.

This sequence belongs to the long (4 C-C) scorpion toxin superfamily. Sodium channel inhibitor family. Alpha subfamily. In terms of tissue distribution, expressed by the venom gland.

The protein resides in the secreted. Functionally, alpha toxins bind voltage-independently at site-3 of sodium channels (Nav) and inhibit the inactivation of the activated channels, thereby blocking neuronal transmission. The toxin principally slows the inactivation process of TTX-sensitive sodium channels. It discriminates neuronal versus muscular sodium channel, as it is more potent on rat brain Nav1.2/SCN2A (EC(50)=29 nM) than on rat skeletal muscle Nav1.4/SCN4A (EC(50)=416 nM). It also shows a weak activity on Nav1.7/SCN9A (EC(50)=1.76 uM). In vivo, the toxin produces pain hypersensibility to mechanical and thermal stimuli. It also exhibits potent analgesic activity (when injected intraperitoneally), increasing hot plate and tail flick withdrawal latencies in a dose-dependent fashion. This paradoxical analgesic action, is significantly suppressed by opioid receptor antagonists, suggesting a pain-induced analgesia mechanism that involves an endogenous opioid system. This led to hypothesis that pain relief induced by peripheral administration of Amm VIII may result from sensitization of primary afferent neurons and subsequent activation of an opioid-dependent noxious inhibitory control. This Androctonus mauritanicus mauritanicus (Scorpion) protein is Alpha-toxin Amm8.